Consider the following 704-residue polypeptide: Polyribonucleotide nucleotidyltransferase (704 aa).

Mg(2+) is bound by residues Asp-487 and Asp-493. The region spanning 554–613 is the KH domain; the sequence is PRLLTIKIHPDKIREVIGKGGSTIQAITKETGTQIDIQDDGTIIIASVNAIAAQAAKSRI. The S1 motif domain maps to 623–691; the sequence is GRIYEGKVAK…KQGRIRLSIK (69 aa).

It belongs to the polyribonucleotide nucleotidyltransferase family. In terms of assembly, component of the RNA degradosome, which is a multiprotein complex involved in RNA processing and mRNA degradation. It depends on Mg(2+) as a cofactor.

Its subcellular location is the cytoplasm. It catalyses the reaction RNA(n+1) + phosphate = RNA(n) + a ribonucleoside 5'-diphosphate. In terms of biological role, involved in mRNA degradation. Catalyzes the phosphorolysis of single-stranded polyribonucleotides processively in the 3'- to 5'-direction. The polypeptide is Polyribonucleotide nucleotidyltransferase (Xanthomonas euvesicatoria pv. vesicatoria (strain 85-10) (Xanthomonas campestris pv. vesicatoria)).